Reading from the N-terminus, the 416-residue chain is Enterobactin exporter EntS (416 aa).

The Cytoplasmic segment spans residues 1-21; it reads MNKQSWLLNLSLLKTHPAFRA. Residues 22-42 traverse the membrane as a helical segment; sequence VFLARFISIVSLGLLGVAVPV. Residues 43 to 55 are Periplasmic-facing; sequence QIQMMTHSTWQVG. The helical transmembrane segment at 56–76 threads the bilayer; sequence LSVTLTGGAMFVGLMVGGVLA. At 77 to 83 the chain is on the cytoplasmic side; it reads DRYERKK. A helical membrane pass occupies residues 84-104; the sequence is VILLARGTCGIGFIGLCLNAL. Residues 105-109 are Periplasmic-facing; sequence LPEPS. Residues 110–130 form a helical membrane-spanning segment; it reads LLAIYLLGLWDGFFASLGVTA. Topologically, residues 131–156 are cytoplasmic; the sequence is LLAATPALVGRENLMQAGAITMLTVR. The chain crosses the membrane as a helical span at residues 157–177; it reads LGSVISPMIGGLLLATGGVAW. A topological domain (periplasmic) is located at residue N178. The helical transmembrane segment at 179–199 threads the bilayer; sequence YGLAAAGTFITLLPLLSLPAL. At 200–218 the chain is on the cytoplasmic side; sequence PPPPQPREHPLKSLLAGFR. Residues 219–239 form a helical membrane-spanning segment; the sequence is FLLASPLVGGIALLGGLLTMA. At 240–256 the chain is on the periplasmic side; the sequence is SAVRVLYPALADNWQMS. A helical membrane pass occupies residues 257–277; the sequence is AAQIGFLYAAIPLGAAIGALT. Topologically, residues 278-287 are cytoplasmic; the sequence is SGKLAHSARP. Residues 288–307 traverse the membrane as a helical segment; that stretch reads GLLMLLSTLGSFLAIGLFGL. Topologically, residues 308–313 are periplasmic; it reads MPMWIL. The helical transmembrane segment at 314–336 threads the bilayer; it reads GVVCLALFGWLSAVSSLLQYTML. Residues 337–356 are Cytoplasmic-facing; it reads QTQTPEAMLGRINGLWTAQN. The chain crosses the membrane as a helical span at residues 357–377; sequence VTGDAIGAALLGGLGAMMTPV. Residue A378 is a topological domain, periplasmic. A helical transmembrane segment spans residues 379 to 399; sequence SASASGFGLLIIGVLLLLVLV. Topologically, residues 400 to 416 are cytoplasmic; the sequence is ELRRFRQTPPQVTASDS.

The protein belongs to the major facilitator superfamily. EntS (TC 2.A.1.38) family.

The protein localises to the cell inner membrane. Functionally, component of an export pathway for enterobactin. The polypeptide is Enterobactin exporter EntS (Escherichia coli (strain 55989 / EAEC)).